The sequence spans 386 residues: Mannitol-1-phosphate 5-dehydrogenase (386 aa).

4–15 is a binding site for NAD(+); the sequence is ALHFGAGNIGRG.

It belongs to the mannitol dehydrogenase family.

It carries out the reaction D-mannitol 1-phosphate + NAD(+) = beta-D-fructose 6-phosphate + NADH + H(+). The sequence is that of Mannitol-1-phosphate 5-dehydrogenase from Caldanaerobacter subterraneus subsp. tengcongensis (strain DSM 15242 / JCM 11007 / NBRC 100824 / MB4) (Thermoanaerobacter tengcongensis).